The sequence spans 309 residues: Aspartate carbamoyltransferase catalytic subunit (309 aa).

Positions 55 and 56 each coordinate carbamoyl phosphate. K85 contacts L-aspartate. Residues R106, H135, and Q138 each coordinate carbamoyl phosphate. Residues R168 and R230 each contribute to the L-aspartate site. Residues L268 and P269 each coordinate carbamoyl phosphate.

The protein belongs to the aspartate/ornithine carbamoyltransferase superfamily. ATCase family. As to quaternary structure, heterododecamer (2C3:3R2) of six catalytic PyrB chains organized as two trimers (C3), and six regulatory PyrI chains organized as three dimers (R2).

The enzyme catalyses carbamoyl phosphate + L-aspartate = N-carbamoyl-L-aspartate + phosphate + H(+). Its pathway is pyrimidine metabolism; UMP biosynthesis via de novo pathway; (S)-dihydroorotate from bicarbonate: step 2/3. Its function is as follows. Catalyzes the condensation of carbamoyl phosphate and aspartate to form carbamoyl aspartate and inorganic phosphate, the committed step in the de novo pyrimidine nucleotide biosynthesis pathway. The polypeptide is Aspartate carbamoyltransferase catalytic subunit (Wigglesworthia glossinidia brevipalpis).